The primary structure comprises 89 residues: Venom peptide BmKAPI (89 aa).

The signal sequence occupies residues 1 to 22 (MKFVFASFALFVIFLCFSQSLS). Cystine bridges form between Cys-28–Cys-66, Cys-37–Cys-62, Cys-41–Cys-55, Cys-46–Cys-86, and Cys-68–Cys-80. The TIL domain maps to 28–86 (CRDNEVFDNCISNCGPPRCSNILNTYPCTNLGPLCTPGCKCKDGRVYDNQGRCVLQTEC).

Belongs to the serine protease inhibitor-like (TIL domain-containing) family. Expressed by the venom gland.

The protein localises to the secreted. In terms of biological role, serine protease inhibitor. The sequence is that of Venom peptide BmKAPI from Olivierus martensii (Manchurian scorpion).